Consider the following 727-residue polypeptide: Endothelin-converting enzyme homolog (727 aa).

The Cytoplasmic segment spans residues 1 to 44; the sequence is MSFNFSRYSGAYTTTFSFLLLALLIVSAVLLSRPYAPALLHAEE. A helical; Signal-anchor for type II membrane protein membrane pass occupies residues 45–65; it reads AYCVSMSCVTAAASVLSLMDA. The Peptidase M13 domain maps to 46–727; sequence YCVSMSCVTA…MNPVHKCEVW (682 aa). 5 cysteine pairs are disulfide-bonded: cysteine 47-cysteine 52, cysteine 70-cysteine 712, cysteine 78-cysteine 672, cysteine 134-cysteine 392, and cysteine 601-cysteine 724. Topologically, residues 66-727 are extracellular; the sequence is TADPCSDFYQ…MNPVHKCEVW (662 aa). 9 N-linked (GlcNAc...) asparagine glycosylation sites follow: asparagine 138, asparagine 160, asparagine 164, asparagine 169, asparagine 222, asparagine 309, asparagine 337, asparagine 340, and asparagine 511. A Zn(2+)-binding site is contributed by histidine 564. Glutamate 565 is an active-site residue. Histidine 568 is a binding site for Zn(2+). Residues asparagine 589 and asparagine 608 are each glycosylated (N-linked (GlcNAc...) asparagine). Glutamate 624 is a Zn(2+) binding site. Aspartate 628 (proton donor) is an active-site residue. N-linked (GlcNAc...) asparagine glycosylation occurs at asparagine 656.

It belongs to the peptidase M13 family. Requires Zn(2+) as cofactor. Highly expressed in brain and midgut, and to a lesser extent in fat body, ovaries, testes and haemocytes.

The protein resides in the cell membrane. The polypeptide is Endothelin-converting enzyme homolog (Locusta migratoria (Migratory locust)).